Consider the following 30-residue polypeptide: Kappa-sparatoxin-Hv1b (30 aa).

Cystine bridges form between Cys-3–Cys-17, Cys-10–Cys-22, and Cys-16–Cys-26. Trp-30 carries the tryptophan amide modification.

The protein belongs to the neurotoxin 10 (Hwtx-1) family. 19 (HpTX2) subfamily. As to expression, expressed by the venom gland.

It localises to the secreted. Inhibitor of voltage-gated potassium channels of the Kv4/KCND family. Inhibition of Kv4.3/KCND3 and Kv4.2/KCND2 is strongly voltage-dependent, while inhibition of Kv4.1/KCND1 shows less voltage-dependence. Its binding site may be near the potassium channel voltage sensor. Also blocks calcium channels. This is Kappa-sparatoxin-Hv1b from Heteropoda venatoria (Brown huntsman spider).